Consider the following 321-residue polypeptide: tRNA(Ile)-lysidine synthase (321 aa).

30-35 provides a ligand contact to ATP; that stretch reads SGGSDS.

The protein belongs to the tRNA(Ile)-lysidine synthase family.

The protein localises to the cytoplasm. The catalysed reaction is cytidine(34) in tRNA(Ile2) + L-lysine + ATP = lysidine(34) in tRNA(Ile2) + AMP + diphosphate + H(+). Ligates lysine onto the cytidine present at position 34 of the AUA codon-specific tRNA(Ile) that contains the anticodon CAU, in an ATP-dependent manner. Cytidine is converted to lysidine, thus changing the amino acid specificity of the tRNA from methionine to isoleucine. The protein is tRNA(Ile)-lysidine synthase of Chlamydia trachomatis serovar L2 (strain ATCC VR-902B / DSM 19102 / 434/Bu).